The following is a 185-amino-acid chain: Ribosome-recycling factor (185 aa).

Belongs to the RRF family.

It localises to the cytoplasm. Functionally, responsible for the release of ribosomes from messenger RNA at the termination of protein biosynthesis. May increase the efficiency of translation by recycling ribosomes from one round of translation to another. The sequence is that of Ribosome-recycling factor from Listeria innocua serovar 6a (strain ATCC BAA-680 / CLIP 11262).